The chain runs to 750 residues: Photosystem I P700 chlorophyll a apoprotein A1 (750 aa).

8 helical membrane-spanning segments follow: residues 70–93 (VFSA…FHGA), 156–179 (LYCT…FHYH), 195–219 (LNHH…HVSL), 291–309 (IAHH…GHMY), 346–369 (WHAQ…HHMY), 385–411 (LSLF…IFMV), 433–455 (AIIS…LYIH), and 531–549 (FLVH…LILL). 2 residues coordinate [4Fe-4S] cluster: C573 and C582. Helical transmembrane passes span 589–610 (HVFL…HFSW) and 664–686 (LSAY…MFLF). H675 is a chlorophyll a' binding site. Residues M683 and Y691 each contribute to the chlorophyll a site. Position 692 (W692) interacts with phylloquinone. Residues 724 to 744 (AVGVTHYLLGGIATTWAFFLA) traverse the membrane as a helical segment.

Belongs to the PsaA/PsaB family. As to quaternary structure, the PsaA/B heterodimer binds the P700 chlorophyll special pair and subsequent electron acceptors. PSI consists of a core antenna complex that captures photons, and an electron transfer chain that converts photonic excitation into a charge separation. The eukaryotic PSI reaction center is composed of at least 11 subunits. Requires P700 is a chlorophyll a/chlorophyll a' dimer, A0 is one or more chlorophyll a, A1 is one or both phylloquinones and FX is a shared 4Fe-4S iron-sulfur center. as cofactor.

The protein localises to the plastid. It is found in the chloroplast thylakoid membrane. It catalyses the reaction reduced [plastocyanin] + hnu + oxidized [2Fe-2S]-[ferredoxin] = oxidized [plastocyanin] + reduced [2Fe-2S]-[ferredoxin]. In terms of biological role, psaA and PsaB bind P700, the primary electron donor of photosystem I (PSI), as well as the electron acceptors A0, A1 and FX. PSI is a plastocyanin-ferredoxin oxidoreductase, converting photonic excitation into a charge separation, which transfers an electron from the donor P700 chlorophyll pair to the spectroscopically characterized acceptors A0, A1, FX, FA and FB in turn. Oxidized P700 is reduced on the lumenal side of the thylakoid membrane by plastocyanin. The sequence is that of Photosystem I P700 chlorophyll a apoprotein A1 from Nasturtium officinale (Watercress).